The following is a 439-amino-acid chain: Protein translocase subunit SecY (439 aa).

The next 10 helical transmembrane spans lie at 23-43, 77-97, 125-145, 154-174, 187-207, 217-237, 274-294, 317-337, 369-389, and 397-417; these read IASV…PIPG, IFAL…LLTL, LVLA…ISGM, FYFY…LMWL, ISII…VHTI, ILLF…VVFI, VIPA…ISWF, YLIL…GLVF, IMIR…LIPE, and VPFY…MDFI.

This sequence belongs to the SecY/SEC61-alpha family. Component of the Sec protein translocase complex. Heterotrimer consisting of SecY, SecE and SecG subunits. The heterotrimers can form oligomers, although 1 heterotrimer is thought to be able to translocate proteins. Interacts with the ribosome. Interacts with SecDF, and other proteins may be involved. Interacts with SecA.

It localises to the cell membrane. The central subunit of the protein translocation channel SecYEG. Consists of two halves formed by TMs 1-5 and 6-10. These two domains form a lateral gate at the front which open onto the bilayer between TMs 2 and 7, and are clamped together by SecE at the back. The channel is closed by both a pore ring composed of hydrophobic SecY resides and a short helix (helix 2A) on the extracellular side of the membrane which forms a plug. The plug probably moves laterally to allow the channel to open. The ring and the pore may move independently. The protein is Protein translocase subunit SecY of Buchnera aphidicola subsp. Schizaphis graminum (strain Sg).